The sequence spans 257 residues: Beta-fibrinogenase (257 aa).

An N-terminal signal peptide occupies residues 1 to 18 (MVLIRVLANLLLLQLSHA). A propeptide spanning residues 19 to 24 (QKSSEL) is cleaved from the precursor. The 224-residue stretch at 25–248 (VVGGDECNIN…YTDWIQSIIA (224 aa)) folds into the Peptidase S1 domain. 6 disulfide bridges follow: C31–C162, C49–C65, C97–C255, C141–C209, C173–C188, and C199–C224. N-linked (GlcNAc...) asparagine glycosylation occurs at N44. H64 acts as the Charge relay system in catalysis. Residues N78 and N102 are each glycosylated (N-linked (GlcNAc...) asparagine). Catalysis depends on D109, which acts as the Charge relay system. N-linked (GlcNAc...) asparagine glycans are attached at residues N153 and N169. S203 functions as the Charge relay system in the catalytic mechanism. N-linked (GlcNAc...) asparagine glycosylation occurs at N250.

As to quaternary structure, monomer. Post-translationally, glycosylated. Contains 23.0% of hexoses, 8.3% of hexosamines and 1.0% of sialic acids. Expressed by the venom gland.

It localises to the secreted. Its activity is regulated as follows. Inhibited by diisopropylfluorophosphate (DFP) and PMSF. Its function is as follows. Snake venom serine protease that has fibrinogenolytic activities by hydrolyzing the beta chain of fibrinogen (FGB). Typical arginine esterase which hydrolyzes esters and amides of arginine. This chain is Beta-fibrinogenase, found in Macrovipera lebetinus (Levantine viper).